We begin with the raw amino-acid sequence, 487 residues long: MLHAVETAFYQKHVLVVGDLMLDRYLWGDVTRISPEAPVPVVHMQRESHRCGGAANVASNLAKLGLHTSIVGFVGEDSDGQVLISALQESGIDTHGILPLAGWSTITKTRVIGGHQQILRMDRETPLADTAHASQLLHQQVMPMLEGEQRPHVIILSDYAKGVLSFELCQALIVRARNLGIPVLVDPKGRDYARYRHATALSPNRGELRGVTGVEDGDLNTLLDAGESLRQSLDVAFLAVTLSEQGIALVDGSEHPRRIPAMAQEVYDVSGAGDTVIATLGAGLAAGLTRLDALHLANLAAGVVVGKLGTAAIDLNELRGALLTDATYEQSDKIANWAHAKQQIARWHAQGEKVVFTNGCFDLLHAGHVTYLEHARRLGQRLVLGLNTDASVSRLKGPERPLIQEQDRARVLAALAAVDLVVLFEQDTPLELIEQLRPDILAKGADYREDQVVGGDLVRRWGGRVALVQLVQGRSTTGIVQRISAQK.

The segment at 1–329 is ribokinase; that stretch reads MLHAVETAFY…GALLTDATYE (329 aa). Residue 204-207 coordinates ATP; sequence NRGE. The active site involves D274. Residues 356 to 487 form a cytidylyltransferase region; that stretch reads FTNGCFDLLH…GIVQRISAQK (132 aa).

The protein in the N-terminal section; belongs to the carbohydrate kinase PfkB family. In the C-terminal section; belongs to the cytidylyltransferase family. Homodimer.

The enzyme catalyses D-glycero-beta-D-manno-heptose 7-phosphate + ATP = D-glycero-beta-D-manno-heptose 1,7-bisphosphate + ADP + H(+). It carries out the reaction D-glycero-beta-D-manno-heptose 1-phosphate + ATP + H(+) = ADP-D-glycero-beta-D-manno-heptose + diphosphate. Its pathway is nucleotide-sugar biosynthesis; ADP-L-glycero-beta-D-manno-heptose biosynthesis; ADP-L-glycero-beta-D-manno-heptose from D-glycero-beta-D-manno-heptose 7-phosphate: step 1/4. It participates in nucleotide-sugar biosynthesis; ADP-L-glycero-beta-D-manno-heptose biosynthesis; ADP-L-glycero-beta-D-manno-heptose from D-glycero-beta-D-manno-heptose 7-phosphate: step 3/4. Functionally, catalyzes the phosphorylation of D-glycero-D-manno-heptose 7-phosphate at the C-1 position to selectively form D-glycero-beta-D-manno-heptose-1,7-bisphosphate. Catalyzes the ADP transfer from ATP to D-glycero-beta-D-manno-heptose 1-phosphate, yielding ADP-D-glycero-beta-D-manno-heptose. This chain is Bifunctional protein HldE, found in Magnetococcus marinus (strain ATCC BAA-1437 / JCM 17883 / MC-1).